The primary structure comprises 358 residues: F-box protein At4g35733 (358 aa).

One can recognise an F-box domain in the interval 4–51 (ATVWSDLPGELLDHIANGLFSKVELLRFRSICKTFRSAVDSDKNFLDH).

Part of a SCF (ASK-cullin-F-box) protein ligase complex.

Its pathway is protein modification; protein ubiquitination. Its function is as follows. Component of SCF(ASK-cullin-F-box) E3 ubiquitin ligase complexes, which may mediate the ubiquitination and subsequent proteasomal degradation of target proteins. The protein is F-box protein At4g35733 of Arabidopsis thaliana (Mouse-ear cress).